Here is a 70-residue protein sequence, read N- to C-terminus: Large ribosomal subunit protein bL31 (70 aa).

Residues Cys-16, Cys-18, Cys-37, and Cys-40 each contribute to the Zn(2+) site.

Belongs to the bacterial ribosomal protein bL31 family. Type A subfamily. As to quaternary structure, part of the 50S ribosomal subunit. Zn(2+) is required as a cofactor.

Binds the 23S rRNA. This is Large ribosomal subunit protein bL31 from Shewanella amazonensis (strain ATCC BAA-1098 / SB2B).